The chain runs to 266 residues: 15-hydroxyprostaglandin dehydrogenase [NAD(+)] (266 aa).

Residues 12–20, 36–37, 63–65, and N91 each bind NAD(+); these read GAAQGIGRA, DW, and CDV. Substrate contacts are provided by S138 and Q148. Y151 (proton acceptor) is an active-site residue. NAD(+) is bound by residues 151–155 and 186–188; these read YCASK and VNT.

This sequence belongs to the short-chain dehydrogenases/reductases (SDR) family. In terms of assembly, homodimer. Detected in colon epithelium (at protein level).

The protein resides in the cytoplasm. The enzyme catalyses prostaglandin E2 + NAD(+) = 15-oxoprostaglandin E2 + NADH + H(+). The catalysed reaction is (15S)-hydroxy-(5Z,8Z,11Z,13E)-eicosatetraenoate + NAD(+) = 15-oxo-(5Z,8Z,11Z,13E)-eicosatetraenoate + NADH + H(+). It carries out the reaction (11R)-hydroxy-(5Z,8Z,12E,14Z)-eicosatetraenoate + NAD(+) = 11-oxo-(5Z,8Z,12E,14Z)-eicosatetraenoate + NADH + H(+). It catalyses the reaction lipoxin A4 + NAD(+) = 15-oxo-(5S,6R)-dihydroxy-(7E,9E,11Z,13E)-eicosatetraenoate + NADH + H(+). The enzyme catalyses 15-oxo-(5S,6R)-dihydroxy-(7E,9E,11Z)-eicosatrienoate + NADH + H(+) = (5S,6R,15S)-trihydroxy-(7E,9E,11Z)-eicosatrienoate + NAD(+). The catalysed reaction is prostaglandin A1 + NAD(+) = 15-oxo-prostaglandin A1 + NADH + H(+). It carries out the reaction prostaglandin E1 + NAD(+) = 15-oxoprostaglandin E1 + NADH + H(+). It catalyses the reaction 14-hydroxy-(4Z,7Z,10Z,12E,16Z,19Z)-docosahexaenoate + NAD(+) = 14-oxo-(4Z,7Z,10Z,12E,16Z,19Z)-docosahexaenoate + NADH + H(+). The enzyme catalyses resolvin E1 + NAD(+) = 18-oxo-resolvin E1 + NADH + H(+). The catalysed reaction is resolvin D1 + NAD(+) = 8-oxoresolvin D1 + NADH + H(+). It carries out the reaction resolvin D1 + NAD(+) = 17-oxoresolvin D1 + NADH + H(+). It catalyses the reaction resolvin D2 + NAD(+) = 7-oxoresolvin D2 + NADH + H(+). The enzyme catalyses resolvin D2 + NAD(+) = 16-oxoresolvin D2 + NADH + H(+). In terms of biological role, catalyzes the NAD-dependent dehydrogenation (oxidation) of a broad array of hydroxylated polyunsaturated fatty acids (mainly eicosanoids and docosanoids, including prostaglandins, lipoxins and resolvins), yielding their corresponding keto (oxo) metabolites. Decreases the levels of the pro-proliferative prostaglandins such as prostaglandin E2 (whose activity is increased in cancer because of an increase in the expression of cyclooxygenase 2) and generates oxo-fatty acid products that can profoundly influence cell function by abrogating pro-inflammatory cytokine expression. Converts resolvins E1, D1 and D2 to their oxo products, which represents a mode of resolvin inactivation. Resolvin E1 plays important roles during the resolution phase of acute inflammation, while resolvins D1 and D2 have a unique role in obesity-induced adipose inflammation. The chain is 15-hydroxyprostaglandin dehydrogenase [NAD(+)] from Homo sapiens (Human).